The primary structure comprises 255 residues: Phosphate import ATP-binding protein PstB (255 aa).

An ABC transporter domain is found at 8–250 (IKSSNLNVHY…PGNKMTQDYI (243 aa)). 40-47 (GPSGCGKS) lines the ATP pocket.

Belongs to the ABC transporter superfamily. Phosphate importer (TC 3.A.1.7) family. In terms of assembly, the complex is composed of two ATP-binding proteins (PstB), two transmembrane proteins (PstC and PstA) and a solute-binding protein (PstS).

The protein localises to the cell inner membrane. The catalysed reaction is phosphate(out) + ATP + H2O = ADP + 2 phosphate(in) + H(+). Its function is as follows. Part of the ABC transporter complex PstSACB involved in phosphate import. Responsible for energy coupling to the transport system. The chain is Phosphate import ATP-binding protein PstB from Pelagibacter ubique (strain HTCC1062).